The sequence spans 325 residues: GMP reductase (325 aa).

Cys-174 functions as the Thioimidate intermediate in the catalytic mechanism. Residue 203-226 participates in NADP(+) binding; sequence IVADGGIRNNGDIAKSIRFGASMC.

Belongs to the IMPDH/GMPR family. GuaC type 2 subfamily.

The enzyme catalyses IMP + NH4(+) + NADP(+) = GMP + NADPH + 2 H(+). Catalyzes the irreversible NADPH-dependent deamination of GMP to IMP. It functions in the conversion of nucleobase, nucleoside and nucleotide derivatives of G to A nucleotides, and in maintaining the intracellular balance of A and G nucleotides. In Ligilactobacillus salivarius (strain UCC118) (Lactobacillus salivarius), this protein is GMP reductase.